A 514-amino-acid polypeptide reads, in one-letter code: uncharacterized protein (514 aa).

3 disordered regions span residues 1 to 68 (MSSP…SESE), 109 to 244 (VPPP…RQAS), and 272 to 484 (RPAV…AQGC). Over residues 368 to 384 (KPQKPKHSSPGKKPAGR) the composition is skewed to basic residues. Residues 385 to 405 (KTRESQAAAREDNDPNRDEVP) are compositionally biased toward basic and acidic residues.

This is an uncharacterized protein from Homo sapiens (Human).